The primary structure comprises 314 residues: Inactive chitinase-like protein 1 (314 aa).

Residues 1-19 (MKEIVRALEGYGPPKDKAA) form the signal peptide. A Chitin-binding type-1 domain is found at 20–60 (EQCGWQAGGALCPGGLCCSQYGWCANTPEYCGSGCQSQCDG). Disulfide bonds link C22/C37, C31/C43, C36/C50, C54/C58, C92/C154, C166/C174, and C273/C305.

This sequence belongs to the glycosyl hydrolase 19 family. Chitinase class I subfamily.

Inactive chitinase-like protein that does not exhibit hydrolytic activity toward chitin. Binds strongly to chitin and possesses antifungal activity toward the fungal pathogen Altenaria alternata in plate assays. Inhibits the growth of Fusarium oxysporum on plate assays. Probably involved in defense against fungal pathogens through a mechanism that only involves carbohydrate binding. The polypeptide is Inactive chitinase-like protein 1 (Hevea brasiliensis (Para rubber tree)).